The sequence spans 272 residues: Acetylglutamate kinase (272 aa).

Substrate is bound by residues 41-42 (GG), Arg-63, and Asn-166.

It belongs to the acetylglutamate kinase family. ArgB subfamily.

The protein resides in the cytoplasm. The catalysed reaction is N-acetyl-L-glutamate + ATP = N-acetyl-L-glutamyl 5-phosphate + ADP. It functions in the pathway amino-acid biosynthesis; L-arginine biosynthesis; N(2)-acetyl-L-ornithine from L-glutamate: step 2/4. Catalyzes the ATP-dependent phosphorylation of N-acetyl-L-glutamate. This is Acetylglutamate kinase from Anaeromyxobacter sp. (strain K).